Here is a 605-residue protein sequence, read N- to C-terminus: F-box/WD repeat-containing protein 1A (605 aa).

The homodimerization domain D stretch occupies residues 128–177; sequence ASYEKEKELCVKYFEQWSESDQVEFVEHLISQMCHYQHGHINSYLKPMLQ. One can recognise an F-box domain in the interval 182-228; it reads TALPARGLDHIAENILSYLDAKSLCAAELVCKEWYRVTSDGMLWKKL. Residues 190–228 are required for down-regulation of SNAI1; sequence DHIAENILSYLDAKSLCAAELVCKEWYRVTSDGMLWKKL. WD repeat units lie at residues 301–338, 341–378, 381–418, 424–461, 464–503, 505–541, and 553–590; these read ETSK…CKRI, GHTG…MLNT, HHCE…DITL, GHRA…FVRT, GHKR…RVLE, HEEL…DPRA, and EHSG…AAHA.

In terms of assembly, homodimer. Self-associates. Component of the SCF(BTRC) complex, composed of SKP1, CUL1 and BTRC. Direct interaction with SKP1 with SKP1 occurs via the F-box domain. Interacts with phosphorylated ubiquitination substrates SMAD3 and SMAD4. Interacts with phosphorylated ubiquitination substrates CTNNB1, NFKBIA, NFKBIB, NFKBIE, NFKB1/nuclear factor NF-kappa-B p105 subunit, ATF4, CDC25A, DLG1, FBXO5 and SNAI1; the interaction requires the phosphorylation of the 2 serine residues in the substrate destruction motif D-S-G-X(2,3,4)-S. Binds UBQLN1. Interacts with CDC34 and UBE2R2. Interacts with FBXW11. Interacts with CUL4A and DDB1. Part of a SCF(BTRC)-like complex lacking CUL1, which is associated with phosphorylated NKBIA and RELA; RELA interacts directly with NFKBIA. Interacts with the phosphorylated form of GLI3. Interacts with CLU. Interacts with PER1 (phosphorylated), PER2 (phosphorylated) and PER3. Interacts with phosphorylated ubiquitination substrate CEP68. Interacts with ZC3H12A; this interaction occurs when ZC3H12A is phosphorylated in a IKBKB/IKKB-dependent manner. Interacts with HSF1; this interaction occurs during mitosis and induces HSF1 ubiquitin-dependent degradation, a process inhibited by CDC20. Interacts with NFE2L1. Interacts with INAVA. Interacts with IL10RA; this interaction leads to IL10RA ubiquitination and subsequent degradation. Interacts with REST. Interacts with KLF4; this interaction leads to KLF4 ubiquitination and subsequent degradation. Interacts with UBR2, as part of a SCF(BTRC) complex; the interaction mediates 'Lys-48'-linked ubiquitination of UBR2 and is regulated by DUSP22 in the T-cell receptor signaling pathway. In terms of processing, ubiquitinated via 'Lys-11'-linked polyubiquitin by some cullin-5-RING E3 ubiquitin-protein ligase complex (ECS complex), leading to its degradation. Deubiquitinated by OTUD5, promoting its stability. In terms of tissue distribution, expressed in heart, brain, liver, skeletal muscle and, most strongly, in testis.

It localises to the cytoplasm. The protein localises to the nucleus. Its pathway is protein modification; protein ubiquitination. Substrate recognition component of a SCF (SKP1-CUL1-F-box protein) E3 ubiquitin-protein ligase complex which mediates the ubiquitination and subsequent proteasomal degradation of target proteins. Recognizes and binds to phosphorylated target proteins. SCF(BTRC) mediates the ubiquitination of phosphorylated NFKB, ATF4, CDC25A, DLG1, FBXO5, PER1, SMAD3, SMAD4, SNAI1 and probably NFKB2. SCF(BTRC) mediates the ubiquitination of CTNNB1 and participates in Wnt signaling. SCF(BTRC) mediates the ubiquitination of NFKBIA, NFKBIB and NFKBIE; the degradation frees the associated NFKB1 to translocate into the nucleus and to activate transcription. Ubiquitination of NFKBIA occurs at 'Lys-21' and 'Lys-22'. The SCF(FBXW11) complex also regulates NF-kappa-B by mediating ubiquitination of phosphorylated NFKB1: specifically ubiquitinates the p105 form of NFKB1, leading to its degradation. SCF(BTRC) mediates the ubiquitination of CEP68; this is required for centriole separation during mitosis. SCF(BTRC) mediates the ubiquitination and subsequent degradation of nuclear NFE2L1. Has an essential role in the control of the clock-dependent transcription via degradation of phosphorylated PER1 and PER2. May be involved in ubiquitination and subsequent proteasomal degradation through a DBB1-CUL4 E3 ubiquitin-protein ligase. Required for activation of NFKB-mediated transcription by IL1B, MAP3K14, MAP3K1, IKBKB and TNF. Required for proteolytic processing of GLI3. Mediates ubiquitination of REST, thereby leading to its proteasomal degradation. SCF(BTRC) mediates the ubiquitination and subsequent proteasomal degradation of KLF4; thereby negatively regulating cell pluripotency maintenance and embryogenesis. SCF(BTRC) acts as a regulator of mTORC1 signaling pathway by catalyzing ubiquitination and subsequent proteasomal degradation of phosphorylated DEPTOR, TFE3 and MITF. SCF(BTRC) directs 'Lys-48'-linked ubiquitination of UBR2 in the T-cell receptor signaling pathway. The protein is F-box/WD repeat-containing protein 1A of Mus musculus (Mouse).